A 91-amino-acid polypeptide reads, in one-letter code: Cell division protein ZapA (91 aa).

A coiled-coil region spans residues 59–86; sequence TAVNIANEYLKLKEEYDRLAAKLRREKG.

This sequence belongs to the ZapA family. Type 2 subfamily. Homodimer. Interacts with FtsZ.

It is found in the cytoplasm. Its function is as follows. Activator of cell division through the inhibition of FtsZ GTPase activity, therefore promoting FtsZ assembly into bundles of protofilaments necessary for the formation of the division Z ring. It is recruited early at mid-cell but it is not essential for cell division. This is Cell division protein ZapA from Geobacillus thermodenitrificans (strain NG80-2).